The chain runs to 561 residues: Long-chain-fatty-acid--CoA ligase (561 aa).

An ATP-binding site is contributed by 213–224 (YTGGTTGVAKGA).

This sequence belongs to the ATP-dependent AMP-binding enzyme family. It depends on Mg(2+) as a cofactor.

The protein resides in the membrane. The enzyme catalyses a long-chain fatty acid + ATP + CoA = a long-chain fatty acyl-CoA + AMP + diphosphate. Its pathway is lipid metabolism; fatty acid beta-oxidation. Functionally, catalyzes the esterification, concomitant with transport, of exogenous long-chain fatty acids into metabolically active CoA thioesters for subsequent degradation or incorporation into phospholipids. This Escherichia coli O157:H7 protein is Long-chain-fatty-acid--CoA ligase (fadD).